Consider the following 414-residue polypeptide: N-carbamoyl-L-amino-acid amidohydrolase (414 aa).

Positions 83, 94, 129, and 195 each coordinate a divalent metal cation. An N-carbamoyl-L-alpha-amino acid is bound by residues glutamine 198, histidine 231, asparagine 281, arginine 294, and glycine 363. Residues 214–333 (GIAGPSWFKV…QIEKNMAAVP (120 aa)) are involved in dimerization. Residue histidine 388 participates in a divalent metal cation binding.

The protein belongs to the peptidase M20 family. In terms of assembly, homodimer. Mn(2+) is required as a cofactor. It depends on Ni(2+) as a cofactor. Co(2+) serves as cofactor. The cofactor is Fe(2+).

It catalyses the reaction an N-carbamoyl-L-alpha-amino acid + H2O + 2 H(+) = an L-alpha-amino acid + NH4(+) + CO2. The enzyme catalyses N-carbamoyl-L-methionine + H2O + 2 H(+) = L-methionine + NH4(+) + CO2. Its function is as follows. Catalyzes the hydrolysis of N-carbamoyl-L-alpha-amino acids to free L-alpha-amino acids. Is strictly L-specific since it is inactive toward N-carbamoyl-D-alpha-amino acids. The protein is N-carbamoyl-L-amino-acid amidohydrolase of Pseudomonas sp. (strain NS671).